A 345-amino-acid polypeptide reads, in one-letter code: MKKMKGEKKAKREGYILLQEIPKLEYIFKNWNEFEDNFYVAEYNYNLKDFKFYMRKYITGIMRIWIYNYEIVMKRKGDEIEITLDDAKKIQCWDLMKILDQVFYPVMRFYQNTIEIEIVNNDVTYYIPIRPKEFKISLKLTENENEIKNAIANTKIKIDGKTLVIKKVGNKGKKYFMRRILRIPIYAKMMLKYRKITHVFAKMMLKKGILEQGEFRIMPLLKLEKLLYKKMNFRDIKYMKYFTMPIYRFNRDRVNLQGISYIDNFIITDYYYDGVNQIVFKLIAVDTRDPIVTTEKEVLATTLCGIDYKNNLWCVSISNLMLYWKISAVYKFMYDLDDRTKVFEY.

This is an uncharacterized protein from Acidianus filamentous virus 2 (isolate Italy/Pozzuoli) (AFV-2).